The following is a 766-amino-acid chain: Alpha-onocerin synthase LCD (766 aa).

PFTB repeat units lie at residues 101-143 (LCRA…GALD), 151-192 (QREI…RLMG), 456-507 (QESY…STTD), 517-558 (IHEC…PGYK), 594-634 (IQEG…LASG), 643-684 (IQRA…HVVH), and 705-752 (LHRA…WALG). The Proton donor role is filled by Asp-488.

This sequence belongs to the terpene cyclase/mutase family.

It catalyses the reaction pre-alpha-onocerin = alpha-onocerin. It participates in secondary metabolite biosynthesis; terpenoid biosynthesis. In terms of biological role, oxidosqualene cyclase involved in the biosynthesis of alpha-onocerin, a triterpenoid characterized by a symmetrical structure due to cyclizations at both termini of dioxidosqualene that inhibits acetylcholinesterase. Catalyzes the second half of the cyclization, exclusively from pre-alpha-onocerin. The chain is Alpha-onocerin synthase LCD from Lycopodium clavatum (Stag's-horn clubmoss).